A 642-amino-acid polypeptide reads, in one-letter code: Conserved oligomeric Golgi complex subunit 6 (642 aa).

Belongs to the COG6 family. In terms of assembly, component of the conserved oligomeric Golgi complex which is composed of eight different subunits and is required for normal Golgi morphology and localization.

It localises to the golgi apparatus membrane. Functionally, required for normal Golgi function. This is Conserved oligomeric Golgi complex subunit 6 (cogc-6) from Caenorhabditis elegans.